A 587-amino-acid chain; its full sequence is Glutamine--tRNA ligase (587 aa).

The 'HIGH' region signature appears at 58–68 (PEPNGYLHIGH). Residues 59–61 (EPN) and 65–71 (HIGHAKS) each bind ATP. L-glutamine is bound by residues D91 and Y240. ATP is bound by residues T259 and 294–295 (RL). The short motif at 301–305 (VTSKR) is the 'KMSKS' region element.

It belongs to the class-I aminoacyl-tRNA synthetase family. As to quaternary structure, monomer.

Its subcellular location is the cytoplasm. It carries out the reaction tRNA(Gln) + L-glutamine + ATP = L-glutaminyl-tRNA(Gln) + AMP + diphosphate. The polypeptide is Glutamine--tRNA ligase (Bordetella parapertussis (strain 12822 / ATCC BAA-587 / NCTC 13253)).